The chain runs to 219 residues: PRELI domain-containing protein 1, mitochondrial (219 aa).

Positions 36–174 constitute a PRELI/MSF1 domain; it reads TEDIVHREVT…ILAKLQGEAP (139 aa).

As to quaternary structure, forms a complex with TRIAP1 in the mitochondrion intermembrane space. Interacts with OPA1 and AIFM1.

The protein resides in the mitochondrion. It localises to the mitochondrion intermembrane space. The catalysed reaction is a 1,2-diacyl-sn-glycero-3-phosphate(in) = a 1,2-diacyl-sn-glycero-3-phosphate(out). Involved in the modulation of the mitochondrial apoptotic pathway by ensuring the accumulation of cardiolipin (CL) in mitochondrial membranes. In vitro, the TRIAP1:PRELID1 complex mediates the transfer of phosphatidic acid (PA) between liposomes and probably functions as a PA transporter across the mitochondrion intermembrane space to provide PA for CL synthesis in the inner membrane. Regulates the mitochondrial apoptotic pathway in primary Th cells. Regulates Th cell differentiation by down-regulating STAT6 thereby reducing IL-4-induced Th2 cell number. May be important for the development of vital and immunocompetent organs. In Bos taurus (Bovine), this protein is PRELI domain-containing protein 1, mitochondrial (PRELID1).